Consider the following 80-residue polypeptide: Beta-toxin KAaH1 (80 aa).

The N-terminal stretch at 1–22 is a signal peptide; it reads MMKLMLFSIIVILFSLIGSIHG. The region spanning 25–80 is the LCN-type CS-alpha/beta domain; that stretch reads VPGNYPLDSSDDTYLCAPLGENPFCIKICRKHGVKYGYCYAFQCWCEYLEDKNVKI. 3 disulfide bridges follow: C40/C63, C49/C68, and C53/C70.

It belongs to the long (3 C-C) scorpion toxin superfamily. Sodium/Potassium channel inhibitor family. Expressed by the venom gland.

Its subcellular location is the secreted. Functionally, inhibits the vertebrate potassium channels Kv1.1/KCNA1 and Kv1.3/KCNA3 in vitro with an IC(50) of 5.3 nM and 50.0 nM respectively. The sequence is that of Beta-toxin KAaH1 from Androctonus australis (Sahara scorpion).